The chain runs to 638 residues: Lactose permease (638 aa).

The segment at Met-1 to Lys-470 is permease. 12 helical membrane passes run Phe-27–Leu-47, Ile-56–Ile-76, Trp-94–Phe-114, Trp-121–Leu-141, Leu-166–Val-186, Trp-204–Phe-224, Leu-261–Tyr-281, Phe-291–Val-311, Trp-320–His-340, Val-343–Val-363, Phe-395–Gly-415, and Thr-429–Phe-449. Residues Ser-503–Gln-610 enclose the PTS EIIA type-1 domain. His-558 is subject to Phosphohistidine; by HPr.

This sequence in the N-terminal section; belongs to the sodium:galactoside symporter (TC 2.A.2) family.

The protein resides in the cell membrane. Responsible for transport of beta-galactosides into the cell, with the concomitant uptake of protons (symport system), and also for transport of homologous and heterologous exchange of beta-galactosides. The polypeptide is Lactose permease (lacS) (Lactobacillus helveticus (Lactobacillus suntoryeus)).